The following is a 728-amino-acid chain: MRSLLLLAPLAWLLLVQAKDDAKLEDNLLVLTVATKETEGFRRFKRSAQFFNYKIQSLGLGEDWSVDGGPAAAGGGQKVRLLKKALEKHADKEDLVILFVDSYDVVFASGPRELLKKFQQAKSQVVFSAEEHIYPDRRLEAKYPTVPDGKRFLGSGGFIGYAPSLSKLVAEWEGQDSDSDQLFYTKIFLNPEKREQINISLDHRCRIFQNLDGALDEVVLKFEMGHVRARNLAYDTLPVVVHGNGPTKLQLNYLGNYIPRFWTFETGCTVCDEGLRSLKGIGDEALPTVLVGVFIEQPTPFLSLFFLRLLRLRYPQKQMRLFIHNQERHHKLQVEQFLAEHGSEYQSVKLVGPEVRMANADARNMGADLCRQDQTCTYYFSVDADVALTEPNSLRLLIEQNKNVIAPLMTRHGRLWSNFWGGLSADGYYARSEDYVDIVQGRRVGVWNVPYISNIYLIKGSALRAELQNVDLFHYSKLDSDMSFCANVRQQEVFMFLTNRHTFGHLLSLDNYQTTHLHNDLWEVFSNPEDWKEKYIHENYTKALAGKLVETPCPDVYWFPIFTEAACDELVEEMEHYGQWSLGDNKDNRIQGGYENVPTIDIHMNQITFEREWHKFLVEYIAPMTEKLYPGYYTRAQFDLAFVVRYKPDEQPSLMPHHDASTFTVNIALNRVGEDYEGGGCRFLRYNCSVRAPRKGWALLHPGRLTHYHEGLPTTKGTRYIAVSFVDP.

Residues M1–A18 form the signal peptide. 2 N-linked (GlcNAc...) asparagine glycosylation sites follow: N198 and N539. Residues Q637–P728 form the Fe2OG dioxygenase domain. Residues H657 and D659 each contribute to the Fe cation site. N-linked (GlcNAc...) asparagine glycosylation is present at N687. H709 is a Fe cation binding site. Residue R719 is part of the active site.

As to quaternary structure, homodimer. Identified in a complex with P3H3 and P3H4. Fe(2+) serves as cofactor. It depends on L-ascorbate as a cofactor. Highly expressed in the liver, heart, lung, skeletal muscle and kidney.

Its subcellular location is the rough endoplasmic reticulum membrane. It catalyses the reaction L-lysyl-[collagen] + 2-oxoglutarate + O2 = (5R)-5-hydroxy-L-lysyl-[collagen] + succinate + CO2. Its function is as follows. Part of a complex composed of PLOD1, P3H3 and P3H4 that catalyzes hydroxylation of lysine residues in collagen alpha chains and is required for normal assembly and cross-linkling of collagen fibrils. Forms hydroxylysine residues in -Xaa-Lys-Gly- sequences in collagens. These hydroxylysines serve as sites of attachment for carbohydrate units and are essential for the stability of the intermolecular collagen cross-links. The protein is Procollagen-lysine,2-oxoglutarate 5-dioxygenase 1 (Plod1) of Mus musculus (Mouse).